A 1008-amino-acid chain; its full sequence is Pre-mRNA-splicing factor SNU114 (1008 aa).

Serine 85 carries the phosphoserine modification. The residue at position 88 (threonine 88) is a Phosphothreonine. Positions 131–338 (ERIINVGVIG…SYYYAHSIPS (208 aa)) constitute a tr-type G domain. Positions 140 to 147 (GPLHSGKT) are G1. GTP is bound at residue 140-147 (GPLHSGKT). The interval 188 to 192 (GLSIK) is G2. Positions 214–217 (DAPG) are G3. GTP-binding positions include 214–218 (DAPGH) and 268–271 (NKLD). The tract at residues 268–271 (NKLD) is G4. Residues 315–317 (STK) form a G5 region. Residues 504–536 (TSQSESRQKRQLHDISKTETSNEDEDEDDETPS) form a disordered region. Basic and acidic residues predominate over residues 509 to 520 (SRQKRQLHDISK). Over residues 524–536 (SNEDEDEDDETPS) the composition is skewed to acidic residues.

Belongs to the TRAFAC class translation factor GTPase superfamily. Classic translation factor GTPase family. EF-G/EF-2 subfamily. As to quaternary structure, belongs to the CWC complex (or CEF1-associated complex), a spliceosome sub-complex reminiscent of a late-stage spliceosome composed of the U2, U5 and U6 snRNAs and at least BUD13, BUD31, BRR2, CDC40, CEF1, CLF1, CUS1, CWC2, CWC15, CWC21, CWC22, CWC23, CWC24, CWC25, CWC27, ECM2, HSH155, IST3, ISY1, LEA1, MSL1, NTC20, PRP8, PRP9, PRP11, PRP19, PRP21, PRP22, PRP45, PRP46, SLU7, SMB1, SMD1, SMD2, SMD3, SMX2, SMX3, SNT309, SNU114, SPP2, SYF1, SYF2, RSE1 and YJU2. Component of the U4/U6-U5 tri-snRNP complex composed of the U4, U6 and U5 snRNAs and at least PRP3, PRP4, PRP6, PRP8, PRP18, PRP31, PRP38, SNU13, SNU23, SNU66, SNU114, SPP381, SMB1, SMD1, SMD2, SMD3, SMX2, SMX3, LSM2, LSM3, LSM4, LSM5, LSM6, LSM7, LSM8, BRR2 and DIB1. Interacts (via C-terminus) with CWC21. Interacts (via N-terminus) with PRP8 (via SCwid domain).

Its subcellular location is the nucleus. Functionally, component of the U5 snRNP complex required for pre-mRNA splicing. Binds GTP. The chain is Pre-mRNA-splicing factor SNU114 (SNU114) from Saccharomyces cerevisiae (strain ATCC 204508 / S288c) (Baker's yeast).